The following is a 340-amino-acid chain: Centromere protein N (340 aa).

Phosphoserine occurs at positions 227 and 236.

This sequence belongs to the CENP-N/CHL4 family. As to quaternary structure, component of the CENPA-NAC complex, at least composed of CENPA, CENPC, CENPH, CENPM, CENPN, CENPT and CENPU. The CENPA-NAC complex interacts with the CENPA-CAD complex, composed of CENPI, CENPK, CENPL, CENPO, CENPP, CENPQ, CENPR and CENPS. Interacts directly with CENPA. Identified in a centromere complex containing histones H2A, H2B and H4, and at least CENPA, CENPB, CENPC, CENPT, CENPN, HJURP, SUPT16H, SSRP1 and RSF1.

Its subcellular location is the nucleus. It localises to the chromosome. It is found in the centromere. The protein resides in the kinetochore. Its function is as follows. Component of the CENPA-NAC (nucleosome-associated) complex, a complex that plays a central role in assembly of kinetochore proteins, mitotic progression and chromosome segregation. The CENPA-NAC complex recruits the CENPA-CAD (nucleosome distal) complex and may be involved in incorporation of newly synthesized CENPA into centromeres. CENPN is the first protein to bind specifically to CENPA nucleosomes and the direct binding of CENPA nucleosomes by CENPN is required for centromere assembly. Required for chromosome congression and efficiently align the chromosomes on a metaphase plate. In Rattus norvegicus (Rat), this protein is Centromere protein N (Cenpn).